The primary structure comprises 853 residues: Aminotransferase PigE (853 aa).

503 to 504 (GT) contributes to the pyridoxal 5'-phosphate binding site. Lys-645 bears the N6-(pyridoxal phosphate)lysine mark. Thr-680 serves as a coordination point for pyridoxal 5'-phosphate.

Belongs to the class-III pyridoxal-phosphate-dependent aminotransferase family. In terms of assembly, homodimer. Pyridoxal 5'-phosphate is required as a cofactor.

The protein operates within antibiotic biosynthesis; prodigiosin biosynthesis. Functionally, involved in the biosynthesis of 2-methyl-3-n-amyl-pyrrole (MAP), one of the terminal products involved in the biosynthesis of the red antibiotic prodigiosin (Pig). Catalyzes the transamination to the aldehyde group of 3-acetyloctanal, resulting in an aminoketone, which spontaneously cyclizes to yield the dihydro form of MAP (H2MAP). This Serratia sp. (strain FS14) protein is Aminotransferase PigE.